A 459-amino-acid chain; its full sequence is Argininosuccinate lyase (459 aa).

The protein belongs to the lyase 1 family. Argininosuccinate lyase subfamily.

The protein resides in the cytoplasm. The enzyme catalyses 2-(N(omega)-L-arginino)succinate = fumarate + L-arginine. It participates in amino-acid biosynthesis; L-arginine biosynthesis; L-arginine from L-ornithine and carbamoyl phosphate: step 3/3. This is Argininosuccinate lyase from Staphylococcus aureus (strain Mu3 / ATCC 700698).